The chain runs to 440 residues: Protein scalloped (440 aa).

Positions 32 to 65 are disordered; that stretch reads TEQQAVGPGTIPSPWTPVNAGPPGALGSADTNGS. A DNA-binding region (TEA) is located at residues 86–162; sequence SADAEGVWSP…QVLARRKLRE (77 aa).

As to quaternary structure, the C-terminus of sd interacts with the C-terminal serine-rich protein domain of vg, to form a complex which acts as a selector for wing development. Interacts (via C-terminus) with yki (via N-terminus) and this interaction enhances its transcriptional activity. As to expression, subset of neuroblasts in the central nervous system and in the peripheral sense organs of the embryo. Expressed in the developing wing primordia initially along the D/V wing boundary, and by the late third larval instar, maximal expression is seen in cells at the D/V wing disk boundary. Less expression in cells located farther from this boundary. Also expressed in wing progenitor cells.

The protein resides in the nucleus. Functionally, transcription factor which plays a key role in the Hippo/SWH (Sav/Wts/Hpo) signaling pathway, a signaling pathway that plays a pivotal role in organ size control and tumor suppression by restricting proliferation and promoting apoptosis. The core of this pathway is composed of a kinase cascade wherein Hippo (Hpo), in complex with its regulatory protein Salvador (Sav), phosphorylates and activates Warts (Wts) in complex with its regulatory protein Mats, which in turn phosphorylates and inactivates the Yorkie (Yki) oncoprotein. The Hippo/SWH signaling pathway inhibits the activity of the transcriptional complex formed by Scalloped (sd) and Yki and the target genes of this pathway include cyclin-E (cycE), diap1 and bantam. Sd promotes nuclear localization of Yki. Involved in the regulation of cell-specific gene expression during development, particularly in the differentiation of the nervous system. When in combination with vestigial (vg) it acts as a transcriptional activation complex that regulates gene expression in the wing. Binding to vg switches the DNA target selectivity of sd. Required autonomously for cell proliferation and viability within the wing blade. Required for proper sensory organ precursor (SOP) differentiation at the wing margin; required for correct expression of sens. The polypeptide is Protein scalloped (sd) (Drosophila melanogaster (Fruit fly)).